The sequence spans 392 residues: Putative glutamate--cysteine ligase 2 (392 aa).

Positions 347-367 (AARKHGAAPEPGTRTRGDDGV) are disordered.

This sequence belongs to the glutamate--cysteine ligase type 2 family. YbdK subfamily.

It catalyses the reaction L-cysteine + L-glutamate + ATP = gamma-L-glutamyl-L-cysteine + ADP + phosphate + H(+). ATP-dependent carboxylate-amine ligase which exhibits weak glutamate--cysteine ligase activity. The protein is Putative glutamate--cysteine ligase 2 of Corynebacterium jeikeium (strain K411).